Reading from the N-terminus, the 354-residue chain is CX3C chemokine receptor 1 (354 aa).

Topologically, residues 1 to 32 (MPTSFPELDLENFEYDDSAEACYLGDIVAFGT) are extracellular. A helical membrane pass occupies residues 33–60 (IFLSIFYSLVFTFGLVGNLLVVLALTNS). Over 61–70 (RKSKSITDIY) the chain is Cytoplasmic. The chain crosses the membrane as a helical span at residues 71–91 (LLNLALSDLLFVATLPFWTHY). Over 92–104 (LISHEGLHNAMCK) the chain is Extracellular. A disulfide bond links Cys103 and Cys176. A helical membrane pass occupies residues 105–126 (LTTAFFFIGFFGGIFFITVISI). The Cytoplasmic portion of the chain corresponds to 127 to 143 (DRYLAIVLAANSMNNRT). Residues 144-168 (VQHGVTISLGVWAAAILVASPQFMF) form a helical membrane-spanning segment. The Extracellular portion of the chain corresponds to 169 to 196 (TKRKDNECLGDYPEVLQEIWPVLRNSEV). The chain crosses the membrane as a helical span at residues 197–216 (NILGFVLPLLIMSFCYFRIV). Residues 217–232 (RTLFSCKNRKKARAIR) lie on the Cytoplasmic side of the membrane. A helical membrane pass occupies residues 233–257 (LILLVVVVFFLFWTPYNIVIFLETL). Over 258–274 (KFYNFFPSCGMKRDLRW) the chain is Extracellular. Residues 275–298 (ALSVTETVAFSHCCLNPFIYAFAG) form a helical membrane-spanning segment. At 299–354 (EKFRRYLRHLYNKCLAVLCGRPVHAGFSTESQRSRQDSILSSLTHYTSEGEGSLLL) the chain is on the cytoplasmic side. Position 345 is a phosphothreonine (Thr345).

The protein belongs to the G-protein coupled receptor 1 family. Found in a ternary complex with CX3CL1 and ITGAV:ITGB3 or ITGA4:ITGB1. Post-translationally, this protein is not N-glycosylated which is unusual for G-protein-coupled receptors. Most abundant in adult spinal cord, brain, kidney, gut, uterus and testes.

It localises to the cell membrane. Functionally, receptor for the C-X3-C chemokine fractalkine (CX3CL1) present on many early leukocyte cells; CX3CR1-CX3CL1 signaling exerts distinct functions in different tissue compartments, such as immune response, inflammation, cell adhesion and chemotaxis. CX3CR1-CX3CL1 signaling mediates cell migratory functions. Responsible for the recruitment of natural killer (NK) cells to inflamed tissues. Acts as a regulator of inflammation process leading to atherogenesis by mediating macrophage and monocyte recruitment to inflamed atherosclerotic plaques, promoting cell survival. Involved in airway inflammation by promoting interleukin 2-producing T helper (Th2) cell survival in inflamed lung. Involved in the migration of circulating monocytes to non-inflamed tissues, where they differentiate into macrophages and dendritic cells. Acts as a negative regulator of angiogenesis, probably by promoting macrophage chemotaxis. Plays a key role in brain microglia by regulating inflammatory response in the central nervous system (CNS) and regulating synapse maturation. Required to restrain the microglial inflammatory response in the CNS and the resulting parenchymal damage in response to pathological stimuli. Involved in brain development by participating in synaptic pruning, a natural process during which brain microglia eliminates extra synapses during postnatal development. Synaptic pruning by microglia is required to promote the maturation of circuit connectivity during brain development. Acts as an important regulator of the gut microbiota by controlling immunity to intestinal bacteria and fungi. Expressed in lamina propria dendritic cells in the small intestine, which form transepithelial dendrites capable of taking up bacteria in order to provide defense against pathogenic bacteria. Required to initiate innate and adaptive immune responses against dissemination of commensal fungi (mycobiota) component of the gut: expressed in mononuclear phagocytes (MNPs) and acts by promoting induction of antifungal IgG antibodies response to confer protection against disseminated C.albicans or C.auris infection. Also acts as a receptor for C-C motif chemokine CCL26, inducing cell chemotaxis. The chain is CX3C chemokine receptor 1 from Rattus norvegicus (Rat).